Here is a 185-residue protein sequence, read N- to C-terminus: Histone H1-delta (185 aa).

Disordered regions lie at residues 1-37 (MADTDAAPAAPAPSTPKKAAKKKASKPKTPASHPKYS) and 90-185 (RHVK…GKKK). Residues 32-105 (SHPKYSDMIA…GASGSFLLAE (74 aa)) form the H15 domain. Residues 109–185 (TPKKAAAKKA…KAAKGKGKKK (77 aa)) show a composition bias toward basic residues.

Belongs to the histone H1/H5 family.

It localises to the nucleus. Its subcellular location is the chromosome. Functionally, histones H1 are necessary for the condensation of nucleosome chains into higher-order structures. The chain is Histone H1-delta from Strongylocentrotus purpuratus (Purple sea urchin).